A 368-amino-acid polypeptide reads, in one-letter code: Alanine racemase (368 aa).

Lys40 functions as the Proton acceptor; specific for D-alanine in the catalytic mechanism. Lys40 carries the post-translational modification N6-(pyridoxal phosphate)lysine. Substrate is bound at residue Arg136. Tyr263 acts as the Proton acceptor; specific for L-alanine in catalysis. Residue Met310 coordinates substrate.

This sequence belongs to the alanine racemase family. Pyridoxal 5'-phosphate serves as cofactor.

It carries out the reaction L-alanine = D-alanine. It participates in amino-acid biosynthesis; D-alanine biosynthesis; D-alanine from L-alanine: step 1/1. In terms of biological role, catalyzes the interconversion of L-alanine and D-alanine. May also act on other amino acids. The protein is Alanine racemase (alr) of Streptococcus gordonii (strain Challis / ATCC 35105 / BCRC 15272 / CH1 / DL1 / V288).